Reading from the N-terminus, the 112-residue chain is MTGKTVTRADLAESVFRKVGLSRTESAELVETVIDEICNAIVRGETVKLSSFATFQVRDKNERIGRNPKTGEEVPISPRRVMTFKASNVLKTRILKAHVTRKVKLKPQNPTP.

This sequence belongs to the bacterial histone-like protein family. In terms of assembly, heterodimer of an alpha and a beta chain.

Its function is as follows. This protein is one of the two subunits of integration host factor, a specific DNA-binding protein that functions in genetic recombination as well as in transcriptional and translational control. The protein is Integration host factor subunit alpha of Rhizobium etli (strain ATCC 51251 / DSM 11541 / JCM 21823 / NBRC 15573 / CFN 42).